The sequence spans 167 residues: Ribosome-binding factor A (167 aa).

A disordered region spans residues 122–167; it reads LAASAKHAGEADPYKGDSPEDIDEDDFDEEDTDLSGDNDLDEDANR. Over residues 128-139 the composition is skewed to basic and acidic residues; the sequence is HAGEADPYKGDS. Residues 140-167 show a composition bias toward acidic residues; that stretch reads PEDIDEDDFDEEDTDLSGDNDLDEDANR.

It belongs to the RbfA family. Monomer. Binds 30S ribosomal subunits, but not 50S ribosomal subunits or 70S ribosomes.

The protein resides in the cytoplasm. In terms of biological role, one of several proteins that assist in the late maturation steps of the functional core of the 30S ribosomal subunit. Associates with free 30S ribosomal subunits (but not with 30S subunits that are part of 70S ribosomes or polysomes). Required for efficient processing of 16S rRNA. May interact with the 5'-terminal helix region of 16S rRNA. This is Ribosome-binding factor A from Paenarthrobacter aurescens (strain TC1).